Here is a 131-residue protein sequence, read N- to C-terminus: D-ribose pyranase (131 aa).

His20 serves as the catalytic Proton donor. Substrate-binding positions include Asp28, His98, and 120–122; that span reads YAN.

It belongs to the RbsD / FucU family. RbsD subfamily. Homodecamer.

The protein resides in the cytoplasm. The enzyme catalyses beta-D-ribopyranose = beta-D-ribofuranose. It functions in the pathway carbohydrate metabolism; D-ribose degradation; D-ribose 5-phosphate from beta-D-ribopyranose: step 1/2. Functionally, catalyzes the interconversion of beta-pyran and beta-furan forms of D-ribose. The sequence is that of D-ribose pyranase from Bacillus mycoides (strain KBAB4) (Bacillus weihenstephanensis).